The following is a 337-amino-acid chain: Ketol-acid reductoisomerase (NADP(+)) (337 aa).

The 181-residue stretch at 3 to 183 folds into the KARI N-terminal Rossmann domain; sequence VEMFYDDDAD…GGARAGVIKT (181 aa). NADP(+)-binding positions include 26–29, lysine 49, serine 52, serine 54, and 84–87; these read YGSQ and DTAQ. Residue histidine 109 is part of the active site. Residue glycine 135 participates in NADP(+) binding. A KARI C-terminal knotted domain is found at 184–329; that stretch reads TFKEETETDL…KKLRDLMSWV (146 aa). The Mg(2+) site is built by aspartate 192, glutamate 196, glutamate 228, and glutamate 232. Substrate is bound at residue serine 253.

It belongs to the ketol-acid reductoisomerase family. The cofactor is Mg(2+).

It catalyses the reaction (2R)-2,3-dihydroxy-3-methylbutanoate + NADP(+) = (2S)-2-acetolactate + NADPH + H(+). The catalysed reaction is (2R,3R)-2,3-dihydroxy-3-methylpentanoate + NADP(+) = (S)-2-ethyl-2-hydroxy-3-oxobutanoate + NADPH + H(+). The protein operates within amino-acid biosynthesis; L-isoleucine biosynthesis; L-isoleucine from 2-oxobutanoate: step 2/4. It participates in amino-acid biosynthesis; L-valine biosynthesis; L-valine from pyruvate: step 2/4. In terms of biological role, involved in the biosynthesis of branched-chain amino acids (BCAA). Catalyzes an alkyl-migration followed by a ketol-acid reduction of (S)-2-acetolactate (S2AL) to yield (R)-2,3-dihydroxy-isovalerate. In the isomerase reaction, S2AL is rearranged via a Mg-dependent methyl migration to produce 3-hydroxy-3-methyl-2-ketobutyrate (HMKB). In the reductase reaction, this 2-ketoacid undergoes a metal-dependent reduction by NADPH to yield (R)-2,3-dihydroxy-isovalerate. The protein is Ketol-acid reductoisomerase (NADP(+)) of Mycobacterium sp. (strain JLS).